Here is a 468-residue protein sequence, read N- to C-terminus: Ribulose bisphosphate carboxylase large chain (468 aa).

Lys5 bears the N6,N6,N6-trimethyllysine mark. Residues Asn114 and Thr164 each coordinate substrate. Lys166 functions as the Proton acceptor in the catalytic mechanism. Substrate is bound at residue Lys168. Lys192, Asp194, and Glu195 together coordinate Mg(2+). At Lys192 the chain carries N6-carboxylysine. The active-site Proton acceptor is His285. 3 residues coordinate substrate: Arg286, His318, and Ser370.

It belongs to the RuBisCO large chain family. Type I subfamily. As to quaternary structure, heterohexadecamer of 8 large chains and 8 small chains; disulfide-linked. The disulfide link is formed within the large subunit homodimers. Requires Mg(2+) as cofactor. Post-translationally, the disulfide bond which can form in the large chain dimeric partners within the hexadecamer appears to be associated with oxidative stress and protein turnover.

It localises to the plastid. Its subcellular location is the chloroplast. It carries out the reaction 2 (2R)-3-phosphoglycerate + 2 H(+) = D-ribulose 1,5-bisphosphate + CO2 + H2O. It catalyses the reaction D-ribulose 1,5-bisphosphate + O2 = 2-phosphoglycolate + (2R)-3-phosphoglycerate + 2 H(+). RuBisCO catalyzes two reactions: the carboxylation of D-ribulose 1,5-bisphosphate, the primary event in carbon dioxide fixation, as well as the oxidative fragmentation of the pentose substrate in the photorespiration process. Both reactions occur simultaneously and in competition at the same active site. The polypeptide is Ribulose bisphosphate carboxylase large chain (Catesbaea spinosa).